Consider the following 176-residue polypeptide: Small ribosomal subunit protein uS5 (176 aa).

An S5 DRBM domain is found at 18-81 (FEEKMLFVNR…SIARKNMISV (64 aa)).

The protein belongs to the universal ribosomal protein uS5 family. As to quaternary structure, part of the 30S ribosomal subunit. Contacts proteins S4 and S8.

Its function is as follows. With S4 and S12 plays an important role in translational accuracy. Located at the back of the 30S subunit body where it stabilizes the conformation of the head with respect to the body. This is Small ribosomal subunit protein uS5 from Deinococcus deserti (strain DSM 17065 / CIP 109153 / LMG 22923 / VCD115).